We begin with the raw amino-acid sequence, 158 residues long: NAD(P)H-quinone oxidoreductase subunit N (158 aa).

The protein belongs to the complex I NdhN subunit family. As to quaternary structure, NDH-1 can be composed of about 15 different subunits; different subcomplexes with different compositions have been identified which probably have different functions.

Its subcellular location is the cellular thylakoid membrane. The catalysed reaction is a plastoquinone + NADH + (n+1) H(+)(in) = a plastoquinol + NAD(+) + n H(+)(out). It carries out the reaction a plastoquinone + NADPH + (n+1) H(+)(in) = a plastoquinol + NADP(+) + n H(+)(out). NDH-1 shuttles electrons from an unknown electron donor, via FMN and iron-sulfur (Fe-S) centers, to quinones in the respiratory and/or the photosynthetic chain. The immediate electron acceptor for the enzyme in this species is believed to be plastoquinone. Couples the redox reaction to proton translocation, and thus conserves the redox energy in a proton gradient. Cyanobacterial NDH-1 also plays a role in inorganic carbon-concentration. The chain is NAD(P)H-quinone oxidoreductase subunit N from Crocosphaera subtropica (strain ATCC 51142 / BH68) (Cyanothece sp. (strain ATCC 51142)).